Reading from the N-terminus, the 438-residue chain is UDP-N-acetylglucosamine 1-carboxyvinyltransferase 1 (438 aa).

22–23 is a phosphoenolpyruvate binding site; the sequence is KN. Arginine 95 lines the UDP-N-acetyl-alpha-D-glucosamine pocket. Catalysis depends on cysteine 119, which acts as the Proton donor. Position 119 is a 2-(S-cysteinyl)pyruvic acid O-phosphothioketal (cysteine 119). UDP-N-acetyl-alpha-D-glucosamine contacts are provided by residues 124–128, aspartate 307, and valine 329; that span reads RPIDL.

Belongs to the EPSP synthase family. MurA subfamily.

It localises to the cytoplasm. The catalysed reaction is phosphoenolpyruvate + UDP-N-acetyl-alpha-D-glucosamine = UDP-N-acetyl-3-O-(1-carboxyvinyl)-alpha-D-glucosamine + phosphate. It participates in cell wall biogenesis; peptidoglycan biosynthesis. Functionally, cell wall formation. Adds enolpyruvyl to UDP-N-acetylglucosamine. The chain is UDP-N-acetylglucosamine 1-carboxyvinyltransferase 1 from Lactiplantibacillus plantarum (strain ATCC BAA-793 / NCIMB 8826 / WCFS1) (Lactobacillus plantarum).